Reading from the N-terminus, the 21-residue chain is Phospholipase A2 crotoxin basic chain (21 aa).

Belongs to the phospholipase A2 family. Group II subfamily. Ca(2+) serves as cofactor. In terms of tissue distribution, expressed by the venom gland.

Its subcellular location is the secreted. It catalyses the reaction a 1,2-diacyl-sn-glycero-3-phosphocholine + H2O = a 1-acyl-sn-glycero-3-phosphocholine + a fatty acid + H(+). Functionally, snake venom phospholipase A2 (PLA2) that induces a conspicuous local myotoxic effect and moderate footpad edema. In vitro, it shows anticoagulant effects and is not cytotoxic on myoblast but is able to lyse myotubes. PLA2 catalyzes the calcium-dependent hydrolysis of the 2-acyl groups in 3-sn-phosphoglycerides. The protein is Phospholipase A2 crotoxin basic chain of Crotalus durissus cumanensis (South American rattlesnake).